Reading from the N-terminus, the 342-residue chain is Phosphate acyltransferase (342 aa).

The protein belongs to the PlsX family. In terms of assembly, homodimer. Probably interacts with PlsY.

The protein resides in the cytoplasm. The catalysed reaction is a fatty acyl-[ACP] + phosphate = an acyl phosphate + holo-[ACP]. It participates in lipid metabolism; phospholipid metabolism. Catalyzes the reversible formation of acyl-phosphate (acyl-PO(4)) from acyl-[acyl-carrier-protein] (acyl-ACP). This enzyme utilizes acyl-ACP as fatty acyl donor, but not acyl-CoA. This is Phosphate acyltransferase from Shewanella woodyi (strain ATCC 51908 / MS32).